An 82-amino-acid polypeptide reads, in one-letter code: Apovitellenin-1 (82 aa).

This sequence belongs to the apovitellenin family. In terms of assembly, monomer. In terms of tissue distribution, found in egg yolk and in plasma.

Protein component of the very low density lipoprotein (VLDL) of egg-laying females. Potent lipoprotein lipase inhibitor, preventing the loss of triglycerides from VLDL on their way from the liver to the growing oocytes. The chain is Apovitellenin-1 from Anas platyrhynchos (Mallard).